Reading from the N-terminus, the 400-residue chain is Nicotinate phosphoribosyltransferase (400 aa).

H220 is modified (phosphohistidine; by autocatalysis).

This sequence belongs to the NAPRTase family. Post-translationally, transiently phosphorylated on a His residue during the reaction cycle. Phosphorylation strongly increases the affinity for substrates and increases the rate of nicotinate D-ribonucleotide production. Dephosphorylation regenerates the low-affinity form of the enzyme, leading to product release.

It catalyses the reaction nicotinate + 5-phospho-alpha-D-ribose 1-diphosphate + ATP + H2O = nicotinate beta-D-ribonucleotide + ADP + phosphate + diphosphate. The protein operates within cofactor biosynthesis; NAD(+) biosynthesis; nicotinate D-ribonucleotide from nicotinate: step 1/1. In terms of biological role, catalyzes the synthesis of beta-nicotinate D-ribonucleotide from nicotinate and 5-phospho-D-ribose 1-phosphate at the expense of ATP. The sequence is that of Nicotinate phosphoribosyltransferase from Escherichia coli (strain K12 / MC4100 / BW2952).